The primary structure comprises 198 residues: Recombination protein RecR (198 aa).

Residues 58–73 (CSVCNNLTEKDPCDFC) form a C4-type zinc finger. The Toprim domain maps to 81–175 (NLICVVESPK…KVTRIAHGLP (95 aa)).

The protein belongs to the RecR family.

May play a role in DNA repair. It seems to be involved in an RecBC-independent recombinational process of DNA repair. It may act with RecF and RecO. The chain is Recombination protein RecR from Halothermothrix orenii (strain H 168 / OCM 544 / DSM 9562).